A 72-amino-acid chain; its full sequence is Large ribosomal subunit protein bL31 (72 aa).

Residues C16, C18, C37, and C40 each contribute to the Zn(2+) site.

This sequence belongs to the bacterial ribosomal protein bL31 family. Type A subfamily. In terms of assembly, part of the 50S ribosomal subunit. Requires Zn(2+) as cofactor.

In terms of biological role, binds the 23S rRNA. In Pseudomonas fluorescens (strain Pf0-1), this protein is Large ribosomal subunit protein bL31.